Consider the following 463-residue polypeptide: Fumarate hydratase class II (463 aa).

Substrate-binding positions include 98–100, 129–132, 139–141, and T187; these read SGT, HPND, and SSN. H188 acts as the Proton donor/acceptor in catalysis. S318 is an active-site residue. Residues S319 and 324-326 contribute to the substrate site; that span reads KVN.

This sequence belongs to the class-II fumarase/aspartase family. Fumarase subfamily. Homotetramer.

It is found in the cytoplasm. It carries out the reaction (S)-malate = fumarate + H2O. Its pathway is carbohydrate metabolism; tricarboxylic acid cycle; (S)-malate from fumarate: step 1/1. Functionally, involved in the TCA cycle. Catalyzes the stereospecific interconversion of fumarate to L-malate. This is Fumarate hydratase class II from Caulobacter vibrioides (strain ATCC 19089 / CIP 103742 / CB 15) (Caulobacter crescentus).